The following is a 340-amino-acid chain: MVRKMNKLAKRLASTSKSRQPEPESDSDGSEFDFDNAIEEKPMEAMDIEEVESDGDDDERELQAAFAAGLLKDGLNIQVAKKRPIINKSAEMKEKLAEITKDLPWVETLEVVTPHSEMDKKVENDDFQRELNFYKQAEKAVQIAYPRLLNLGIKVLRPTDYYAEMAKSDTHMQKVRKRLLGIQEMKERQEAFRRIREEKKFAVKVQKEVLAAKNTEKKNLAEAVKKHKKGMKQQLEDMLNNVKRHGLDQDDDAPTGAFGDRLGGRGGAGRGGAGRGGSMRNAGELKRKLKSDKFGYGGKKKGMKRNNKESFNDLFGAPRGGFGGRGRGGGRGGRGGRGRR.

Positions 1–10 (MVRKMNKLAK) are enriched in basic residues. Disordered regions lie at residues 1–59 (MVRK…DDDE) and 245–340 (HGLD…RGRR). Acidic residues-rich tracts occupy residues 23–37 (PESD…FDNA) and 46–59 (MDIE…DDDE). A coiled-coil region spans residues 206–245 (QKEVLAAKNTEKKNLAEAVKKHKKGMKQQLEDMLNNVKRH). 2 stretches are compositionally biased toward gly residues: residues 264–277 (GRGG…GRGG) and 318–333 (PRGG…GRGG).

The protein belongs to the EBP2 family.

The protein resides in the nucleus. It localises to the nucleolus. Functionally, required for the processing of the 27S pre-rRNA. The sequence is that of Probable rRNA-processing protein EBP2 homolog from Caenorhabditis elegans.